The primary structure comprises 361 residues: D-alanine--D-alanine ligase (361 aa).

One can recognise an ATP-grasp domain in the interval Lys134–Asp344. ATP is bound at residue Lys167–Glu222. Mg(2+)-binding residues include Asp297, Glu311, and Asn313.

This sequence belongs to the D-alanine--D-alanine ligase family. It depends on Mg(2+) as a cofactor. Requires Mn(2+) as cofactor.

It is found in the cytoplasm. It carries out the reaction 2 D-alanine + ATP = D-alanyl-D-alanine + ADP + phosphate + H(+). It functions in the pathway cell wall biogenesis; peptidoglycan biosynthesis. Functionally, cell wall formation. The chain is D-alanine--D-alanine ligase from Borreliella afzelii (strain PKo) (Borrelia afzelii).